Reading from the N-terminus, the 377-residue chain is tRNA pseudouridine synthase Pus10 (377 aa).

Asp206 serves as the catalytic Nucleophile. The substrate site is built by Tyr270 and Tyr339.

Belongs to the pseudouridine synthase Pus10 family.

It catalyses the reaction uridine(54) in tRNA = pseudouridine(54) in tRNA. It carries out the reaction uridine(55) in tRNA = pseudouridine(55) in tRNA. Responsible for synthesis of pseudouridine from uracil-54 and uracil-55 in the psi GC loop of transfer RNAs. In Picrophilus torridus (strain ATCC 700027 / DSM 9790 / JCM 10055 / NBRC 100828 / KAW 2/3), this protein is tRNA pseudouridine synthase Pus10.